Consider the following 114-residue polypeptide: Protein 4 (114 aa).

This Hordeum vulgare (Barley) protein is Protein 4 (4).